The chain runs to 86 residues: Small ribosomal subunit protein bS20 (86 aa).

The segment at 1-25 is disordered; sequence MANIKSQMKRIRTNEAARKRNQSVK.

It belongs to the bacterial ribosomal protein bS20 family.

Binds directly to 16S ribosomal RNA. The sequence is that of Small ribosomal subunit protein bS20 from Nocardia farcinica (strain IFM 10152).